The chain runs to 340 residues: Ribosomal RNA large subunit methyltransferase F (340 aa).

It belongs to the methyltransferase superfamily. METTL16/RlmF family.

Its subcellular location is the cytoplasm. It carries out the reaction adenosine(1618) in 23S rRNA + S-adenosyl-L-methionine = N(6)-methyladenosine(1618) in 23S rRNA + S-adenosyl-L-homocysteine + H(+). In terms of biological role, specifically methylates the adenine in position 1618 of 23S rRNA. In Dechloromonas aromatica (strain RCB), this protein is Ribosomal RNA large subunit methyltransferase F.